Reading from the N-terminus, the 394-residue chain is Endothelial cell-selective adhesion molecule (394 aa).

Positions 1–29 (MILQAGTPETSLLRVLFLGLSTLAAFSRA) are cleaved as a signal peptide. Over 30 to 251 (QMELHVPPGL…LDVMTGSKAA (222 aa)) the chain is Extracellular. Residues 37-146 (PGLNKLEAVE…EGKSIGHSIK (110 aa)) form the Ig-like V-type domain. Asn111, Asn172, Asn216, and Asn239 each carry an N-linked (GlcNAc...) asparagine glycan. Positions 159–243 (PSCSLQGVPY…GFAKCNVTLD (85 aa)) constitute an Ig-like C2-type domain. Cys177 and Cys227 are joined by a disulfide. Residues 252–272 (VVAGAVVGTFVGLVLIAGLVL) form a helical membrane-spanning segment. The Cytoplasmic portion of the chain corresponds to 273 to 394 (LYQRRSKTLE…PAQSQAGSLV (122 aa)). Ser304 is modified (phosphoserine). 2 stretches are compositionally biased toward polar residues: residues 304–318 (SDTI…SVTS) and 335–347 (FTPT…QALS). A disordered region spans residues 304-372 (SDTISKNGTL…SLTPGGVSSS (69 aa)). 2 positions are modified to phosphothreonine: Thr336 and Thr338. A phosphoserine mark is found at Ser340, Ser343, Ser348, and Ser375.

Interacts with MAGI1. In terms of tissue distribution, highly expressed in the heart and lung. Weakly expressed in the kidney and skin. Expression is restricted to the vascular endothelial cells. Expressed in the kidney, heart and tongue (at protein level). Also expressed on megakaryocytes and activated platelets.

The protein localises to the cell junction. It is found in the adherens junction. The protein resides in the tight junction. Its subcellular location is the cell membrane. Its function is as follows. Can mediate aggregation most likely through a homophilic molecular interaction. In Mus musculus (Mouse), this protein is Endothelial cell-selective adhesion molecule (Esam).